A 294-amino-acid chain; its full sequence is MALRSAAGRLASSSRRRLLSPPTSIHTAFLHSHATSFGYKQVAEEDKSKLVGNVFSSVASSYDLMNDLMSVGLHRLWKDRLISKLNPFPGMKHLDVAGGTGDVAFRALERINSVSHRAMQGTLTDIEEETQIYVCDINPNMLNVGKKRASERGYKEGHCLSWIQGDAEALSFEDGSMDGYTIAFGIRNVTHIEKALSEAYRVLKRGGRFLCLELSHVDVPLFKEIYDVYSFSVIPAVGELVAGDRQSYQYLVESIRRFPNQEKFAQMIQEAGFERVEYENLVGGVVAIHSGLKL.

Residues 1 to 10 (MALRSAAGRL) constitute a mitochondrion transit peptide. S-adenosyl-L-methionine is bound by residues threonine 100, aspartate 136, and 166–167 (DA).

The protein belongs to the class I-like SAM-binding methyltransferase superfamily. MenG/UbiE family. Component of a multi-subunit COQ enzyme complex.

The protein resides in the mitochondrion inner membrane. The catalysed reaction is a 2-methoxy-6-(all-trans-polyprenyl)benzene-1,4-diol + S-adenosyl-L-methionine = a 5-methoxy-2-methyl-3-(all-trans-polyprenyl)benzene-1,4-diol + S-adenosyl-L-homocysteine + H(+). It participates in cofactor biosynthesis; ubiquinone biosynthesis. Functionally, methyltransferase required for the conversion of 2-polyprenyl-6-methoxy-1,4-benzoquinol (DDMQH2) to 2-polyprenyl-3-methyl-6-methoxy-1,4-benzoquinol (DMQH2). This is 2-methoxy-6-polyprenyl-1,4-benzoquinol methylase, mitochondrial from Oryza sativa subsp. japonica (Rice).